Here is a 361-residue protein sequence, read N- to C-terminus: Ribosomal RNA small subunit methyltransferase H (361 aa).

S-adenosyl-L-methionine is bound by residues 54–56 (GGH), Asp-74, Tyr-101, Asp-122, and Gln-129. The interval 318–361 (ARNSRASSAKLRAAQRLAEGQAPRPRRRNKYAPEGRDEPEGGAA) is disordered. Basic and acidic residues predominate over residues 348 to 361 (YAPEGRDEPEGGAA).

This sequence belongs to the methyltransferase superfamily. RsmH family.

It is found in the cytoplasm. It carries out the reaction cytidine(1402) in 16S rRNA + S-adenosyl-L-methionine = N(4)-methylcytidine(1402) in 16S rRNA + S-adenosyl-L-homocysteine + H(+). Its function is as follows. Specifically methylates the N4 position of cytidine in position 1402 (C1402) of 16S rRNA. The sequence is that of Ribosomal RNA small subunit methyltransferase H from Nitratidesulfovibrio vulgaris (strain DSM 19637 / Miyazaki F) (Desulfovibrio vulgaris).